The following is a 293-amino-acid chain: Elongation factor Ts (293 aa).

The tract at residues 81 to 84 (TDFV) is involved in Mg(2+) ion dislocation from EF-Tu.

This sequence belongs to the EF-Ts family.

The protein localises to the cytoplasm. Associates with the EF-Tu.GDP complex and induces the exchange of GDP to GTP. It remains bound to the aminoacyl-tRNA.EF-Tu.GTP complex up to the GTP hydrolysis stage on the ribosome. This chain is Elongation factor Ts, found in Methylococcus capsulatus (strain ATCC 33009 / NCIMB 11132 / Bath).